The following is a 672-amino-acid chain: Transcriptional activator of sulfur metabolism MET4 (672 aa).

Residues 1 to 10 are compositionally biased toward basic and acidic residues; it reads MKQEQSHEGD. Residues 1 to 44 are disordered; that stretch reads MKQEQSHEGDSYSTEFINLFGKDTATHPSSNNGANNNGMGSTNS. The span at 29–44 shows a compositional bias: low complexity; it reads SSNNGANNNGMGSTNS. 3 consecutive short sequence motifs (9aaTAD) follow at residues 89 to 97, 102 to 110, and 109 to 117; these read ILLEQLAYV, PSLDNEFSN, and SNVDWNVNT. Residues 95–144 form a transcriptional activation region; the sequence is AYVDNFIPSLDNEFSNVDWNVNTTHNNANNNGADTFSSINANPFDLDEQL. 2 disordered regions span residues 157–265 and 299–347; these read IFPD…NMTS and TTHT…NITV. The span at 165-174 shows a compositional bias: low complexity; that stretch reads SNNNNNSNNG. The span at 175–188 shows a compositional bias: basic and acidic residues; the sequence is NDDHSNHDVLHEDP. The interval 188-235 is inhibitory region; AdoMet responsiveness; required for interaction with MET30; that stretch reads PSTNNRQRNPHFLTQRRNTFLTSQYDQSKSRFSSKNKRNGNNGETNNF. Polar residues predominate over residues 202-214; it reads QRRNTFLTSQYDQ. The segment covering 226–238 has biased composition (low complexity); that stretch reads NGNNGETNNFGDN. Polar residues-rich tracts occupy residues 251–265 and 301–321; these read GSPS…NMTS and HTPN…SSSQ. Residues 312–375 form an auxiliary; required for high transcriptional activity under nonrepressive growth conditions region; that stretch reads VTSAQNSSSQ…NVPNGAYNSL (64 aa). A required for interaction with MET31 and MET32 region spans residues 375-403; sequence LISAGFDNDQIDAIAAIMAYHHQKKIREN. Ser416 carries the post-translational modification Phosphoserine. The tract at residues 475-574 is disordered; it reads PKSNNIHNQR…DNEDDEYDDA (100 aa). The span at 477 to 486 shows a compositional bias: polar residues; sequence SNNIHNQRQP. The span at 487 to 498 shows a compositional bias: basic and acidic residues; the sequence is SRNDHKISRESD. The span at 499-512 shows a compositional bias: low complexity; the sequence is GNNGNDNVHHNNAV. 2 stretches are compositionally biased toward basic and acidic residues: residues 519–528 and 537–565; these read RGDEIAKIRS and SDHK…KYSD. Ser564 is subject to Phosphoserine. The bZIP domain maps to 586–649; the sequence is KKELGDDDED…KLLKNLVLSS (64 aa). Residues 601–612 form a basic motif region; sequence KKSHQKKKLKEK. Residues 609 to 648 adopt a coiled-coil conformation; sequence LKEKELESSIHELTEIAASLQKRIHTLETENKLLKNLVLS. The tract at residues 614 to 642 is leucine-zipper; sequence LESSIHELTEIAASLQKRIHTLETENKLL.

Belongs to the bZIP family. As to quaternary structure, interacts with MET30. Tethered to DNA through two alternate complexes associating MET4 with MET28 and either MET31 or MET32. Interacts with MET28 and CBF1 through its leucine zipper to form a heteromeric complex.

The protein localises to the nucleus. In terms of biological role, positive trans-acting factor capable of stimulating the transcription of the MET genes from the methionine biosynthetic pathway. MET4, MET28 and CBF1 are required for full induction of MET25 and MET16 gene transcription. MET4 controls as well the derepression of MET6. Required for the transcription of genes necessary for sulfur amino acid biosynthesis. Involved in the transcription activation of MET28 and MET30. Required for MET3 gene expression via assembly of the MET4-MET28-MET31 and MET4-MET28-MET32 complexes. Involved in response to cadmium and arsenic. Cadmium-activated MET4 also induces glutathione biosynthesis. This chain is Transcriptional activator of sulfur metabolism MET4 (MET4), found in Saccharomyces cerevisiae (strain ATCC 204508 / S288c) (Baker's yeast).